The sequence spans 398 residues: Cytochrome b (398 aa).

A helical transmembrane segment spans residues 45 to 65 (LGSIAGIALVIQIITGVILAM). 2 residues coordinate heme b: His95 and His109. The next 9 helical transmembrane spans lie at 96-116 (AVGA…GLYY), 129-149 (IGII…VLPW), 164-184 (FSAI…GFSV), 192-212 (FFSL…LHLV), 245-265 (FVGF…EPNY), 277-297 (PLVT…YAIL), 304-324 (LGGV…PWLD), 339-359 (MAFW…GQPA), and 366-386 (ISRF…PLIG). Heme b contacts are provided by His196 and His210.

Belongs to the cytochrome b family. As to quaternary structure, the main subunits of complex b-c1 are: cytochrome b, cytochrome c1 and the Rieske protein. Heme b is required as a cofactor.

The protein resides in the cell membrane. Its function is as follows. Component of the ubiquinol-cytochrome c reductase complex (complex III or cytochrome b-c1 complex), which is a respiratory chain that generates an electrochemical potential coupled to ATP synthesis. In Rickettsia conorii (strain ATCC VR-613 / Malish 7), this protein is Cytochrome b (petB).